A 234-amino-acid polypeptide reads, in one-letter code: Immune-associated nucleotide-binding protein 2 (234 aa).

Residues 21–223 enclose the AIG1-type G domain; sequence KPVKNIVLVG…YTEDMYRNIK (203 aa). GTP contacts are provided by residues 30 to 38, Ser51, and Asn183; that span reads GRSVNGICT.

Belongs to the TRAFAC class TrmE-Era-EngA-EngB-Septin-like GTPase superfamily. AIG1/Toc34/Toc159-like paraseptin GTPase family. IAN subfamily. In terms of tissue distribution, mostly expressed in pollen. Also detected in lateral roots and radicles.

The polypeptide is Immune-associated nucleotide-binding protein 2 (Arabidopsis thaliana (Mouse-ear cress)).